Here is a 611-residue protein sequence, read N- to C-terminus: Mitogen-activated protein kinase 10 (611 aa).

A Protein kinase domain is found at 25 to 316 (YKIQEVIGKG…AEEALAHPYF (292 aa)). ATP is bound by residues 31–39 (IGKGSYGVV) and Lys54. The active-site Proton acceptor is the Asp151. At Thr187 the chain carries Phosphothreonine. The TXY motif lies at 187–189 (TDY). A Phosphotyrosine modification is found at Tyr189. The segment at 394 to 481 (ENGGNGPVIP…RVVGPVLPYE (88 aa)) is disordered. Residues 426 to 439 (EQPRIGPSRDKPSD) are compositionally biased toward basic and acidic residues.

Belongs to the protein kinase superfamily. CMGC Ser/Thr protein kinase family. MAP kinase subfamily. In terms of processing, dually phosphorylated on Thr-187 and Tyr-189, which activates the enzyme.

It carries out the reaction L-seryl-[protein] + ATP = O-phospho-L-seryl-[protein] + ADP + H(+). The catalysed reaction is L-threonyl-[protein] + ATP = O-phospho-L-threonyl-[protein] + ADP + H(+). Activated by threonine and tyrosine phosphorylation. The chain is Mitogen-activated protein kinase 10 (MPK10) from Oryza sativa subsp. japonica (Rice).